Consider the following 469-residue polypeptide: Aryl-phospho-beta-D-glucosidase BglH (469 aa).

Glu175 acts as the Proton donor in catalysis. Glu368 (nucleophile) is an active-site residue.

The protein belongs to the glycosyl hydrolase 1 family.

The catalysed reaction is 6-phospho-beta-D-glucosyl-(1-&gt;4)-D-glucose + H2O = D-glucose 6-phosphate + D-glucose. In terms of biological role, catalyzes the hydrolysis of aryl-phospho-beta-D-glucosides such as 4-methylumbelliferyl-phospho-beta-D-glucopyranoside (MUG-P), phosphoarbutin and phosphosalicin. Plays a major role in the utilization of arbutin or salicin as the sole carbon source. BglA and BglH are the major proteins contributing to hydrolysis of MUG-P by extracts of late-exponential-phase or stationary-phase B.subtilis cells. In Bacillus subtilis (strain 168), this protein is Aryl-phospho-beta-D-glucosidase BglH (bglH).